We begin with the raw amino-acid sequence, 442 residues long: Myb family transcription factor PHL13 (442 aa).

Positions 235 to 295 (MTSKQRMRWT…HLQKYRTARY (61 aa)) constitute an HTH myb-type domain. Residues 266–291 (PKAVLKLINSPGLTVYHVKSHLQKYR) constitute a DNA-binding region (H-T-H motif). A coiled coil region spans residues 329–349 (TEALRLQMKVQKQLHEQLEIQ). The LHEQLE signature appears at 342–347 (LHEQLE). Residues 370–380 (QQKMQENKKDS) are compositionally biased toward basic and acidic residues. Positions 370–442 (QQKMQENKKD…TSNRKRVRED (73 aa)) are disordered. Polar residues predominate over residues 395-434 (SPNLSQPFLHKATNSEPSITQKLQNGSSTMDQSESTSGTS).

Belongs to the MYB-CC family.

Its subcellular location is the nucleus. The polypeptide is Myb family transcription factor PHL13 (Arabidopsis thaliana (Mouse-ear cress)).